The chain runs to 156 residues: Ribonuclease H (156 aa).

The 142-residue stretch at 3–144 (ELKLIHIFTD…CDVLARTAAE (142 aa)) folds into the RNase H type-1 domain. Aspartate 12, glutamate 50, aspartate 72, and aspartate 136 together coordinate Mg(2+).

Belongs to the RNase H family. In terms of assembly, monomer. Mg(2+) serves as cofactor.

The protein resides in the cytoplasm. The catalysed reaction is Endonucleolytic cleavage to 5'-phosphomonoester.. Functionally, endonuclease that specifically degrades the RNA of RNA-DNA hybrids. The chain is Ribonuclease H from Shewanella baltica (strain OS223).